Reading from the N-terminus, the 141-residue chain is MAKKVIGFIKLQIPAGGANPAPPVGPALGQKGVNIMEFCKQFNAKTQSEAGMIIPVVITVYTDKSFTFITKTPPAAVLLLKEAGLQKGSGEPNRNKVGTVTREQVKKIAELKKPDLNAFDLRGAEEMIMGTARSMGIVIEE.

Belongs to the universal ribosomal protein uL11 family. Part of the ribosomal stalk of the 50S ribosomal subunit. Interacts with L10 and the large rRNA to form the base of the stalk. L10 forms an elongated spine to which L12 dimers bind in a sequential fashion forming a multimeric L10(L12)X complex. In terms of processing, one or more lysine residues are methylated.

In terms of biological role, forms part of the ribosomal stalk which helps the ribosome interact with GTP-bound translation factors. The sequence is that of Large ribosomal subunit protein uL11 from Chlorobium phaeovibrioides (strain DSM 265 / 1930) (Prosthecochloris vibrioformis (strain DSM 265)).